Here is a 1273-residue protein sequence, read N- to C-terminus: MYISLIFFLSNHFPPLISIPIFIFLSFSSPTNYTHLKLKKMQPSGDPAPEKEKEMTQPKVSLLKLFSFADFYDCVLMTLGSVGACIHGASVPIFFIFFGKLINIIGLAYLFPKQASHRVAKYSLDFVYLSVAILFSSWLEVACWMHTGERQAAKMRRAYLRSMLSQDISLFDTEASTGEVISAITSDILVVQDALSEKVGNFLHYISRFIAGFAIGFTSVWQISLVTLSIVPLIALAGGIYAFVAIGLIARVRKSYIKAGEIAEEVIGNVRTVQAFTGEERAVRLYREALENTYKYGRKAGLTKGLGLGSMHCVLFLSWALLVWFTSVVVHKDIADGGKSFTTMLNVVIAGLSLGQAAPDISAFVRAKAAAYPIFKMIERNTVTKTSAKSGRKLGKVDGHIQFKDATFSYPSRPDVVIFDRLNLAIPAGKIVALVGGSGSGKSTVISLIERFYEPISGAVLLDGNNISELDIKWLRGQIGLVNQEPALFATTIRENILYGKDDATAEEITRAAKLSEAISFINNLPEGFETQVGERGIQLSGGQKQRIAISRAIVKNPSILLLDEATSALDAESEKSVQEALDRVMVGRTTVVVAHRLSTVRNADIIAVVHEGKIVEFGNHENLISNPDGAYSSLLRLQETASLQRNPSLNRTLSRPHSIKYSRELSRTRSSFCSERESVTRPDGADPSKKVKVTVGRLYSMIRPDWMYGVCGTICAFIAGSQMPLFALGVSQALVSYYSGWDETQKEIKKIAILFCCASVITLIVYTIEHICFGTMGERLTLRVRENMFRAILKNEIGWFDEVDNTSSMLASRLESDATLLKTIVVDRSTILLQNLGLVVTSFIIAFILNWRLTLVVLATYPLVISGHISEKLFMQGYGGDLNKAYLKANMLAGESVSNIRTVAAFCAEEKILELYSRELLEPSKSSFRRGQIAGLFYGVSQFFIFSSYGLALWYGSTLMDKGLAGFKSVMKTFMVLIVTALAMGETLALAPDLLKGNQMVASVFEILDRKTQIVGETSEELNNVEGTIELKGVHFSYPSRPDVVIFRDFDLIVRAGKSMALVGQSGSGKSSVISLILRFYDPTAGKVMIEGKDIKKLDLKALRKHIGLVQQEPALFATTIYENILYGNEGASQSEVVESAMLANAHSFITSLPEGYSTKVGERGVQMSGGQRQRIAIARAILKNPAILLLDEATSALDVESERVVQQALDRLMANRTTVVVAHRLSTIKNADTISVLHGGKIVEQGSHRKLVLNKSGPYFKLISLQQQQQP.

The N-terminal stretch at 1–30 (MYISLIFFLSNHFPPLISIPIFIFLSFSSP) is a signal peptide. Helical transmembrane passes span 66-86 (FSFA…GACI), 91-111 (VPIF…AYLF), 126-146 (FVYL…CWMH), 209-229 (FIAG…VTLS), 230-250 (IVPL…GLIA), 305-325 (GLGL…LVWF), and 345-365 (LNVV…SAFV). An ABC transmembrane type-1 1 domain is found at 77–366 (MTLGSVGACI…AAPDISAFVR (290 aa)). The ABC transporter 1 domain maps to 401 to 637 (IQFKDATFSY…PDGAYSSLLR (237 aa)). ATP is bound at residue 436–443 (GGSGSGKS). Asn466 and Asn651 each carry an N-linked (GlcNAc...) asparagine glycan. An ABC transmembrane type-1 2 domain is found at 710 to 997 (GVCGTICAFI…TLALAPDLLK (288 aa)). 2 consecutive transmembrane segments (helical) span residues 711–731 (VCGT…ALGV) and 752–772 (IAIL…IEHI). Asn806 is a glycosylation site (N-linked (GlcNAc...) asparagine). 3 consecutive transmembrane segments (helical) span residues 832–852 (ILLQ…ILNW), 934–954 (IAGL…GLAL), and 975–995 (FMVL…APDL). Positions 1030-1266 (IELKGVHFSY…KSGPYFKLIS (237 aa)) constitute an ABC transporter 2 domain. 1065–1072 (GQSGSGKS) serves as a coordination point for ATP. Asn1217 and Asn1256 each carry an N-linked (GlcNAc...) asparagine glycan.

This sequence belongs to the ABC transporter superfamily. ABCB family. Multidrug resistance exporter (TC 3.A.1.201) subfamily. Interacts with 1-naphthylphthalamic acid (NPA).

The protein localises to the membrane. This chain is ABC transporter B family member 2 (ABCB2), found in Arabidopsis thaliana (Mouse-ear cress).